We begin with the raw amino-acid sequence, 184 residues long: Threonylcarbamoyl-AMP synthase (184 aa).

The YrdC-like domain occupies 3–184; it reads AWFIQKAVSV…DAATGAILRQ (182 aa).

The protein belongs to the SUA5 family. TsaC subfamily.

The protein localises to the cytoplasm. It carries out the reaction L-threonine + hydrogencarbonate + ATP = L-threonylcarbamoyladenylate + diphosphate + H2O. Functionally, required for the formation of a threonylcarbamoyl group on adenosine at position 37 (t(6)A37) in tRNAs that read codons beginning with adenine. Catalyzes the conversion of L-threonine, HCO(3)(-)/CO(2) and ATP to give threonylcarbamoyl-AMP (TC-AMP) as the acyladenylate intermediate, with the release of diphosphate. In Hahella chejuensis (strain KCTC 2396), this protein is Threonylcarbamoyl-AMP synthase.